Here is a 90-residue protein sequence, read N- to C-terminus: Co-chaperonin GroES (90 aa).

This sequence belongs to the GroES chaperonin family. As to quaternary structure, heptamer of 7 subunits arranged in a ring. Interacts with the chaperonin GroEL.

It localises to the cytoplasm. In terms of biological role, together with the chaperonin GroEL, plays an essential role in assisting protein folding. The GroEL-GroES system forms a nano-cage that allows encapsulation of the non-native substrate proteins and provides a physical environment optimized to promote and accelerate protein folding. GroES binds to the apical surface of the GroEL ring, thereby capping the opening of the GroEL channel. The polypeptide is Co-chaperonin GroES (Bacteroides thetaiotaomicron (strain ATCC 29148 / DSM 2079 / JCM 5827 / CCUG 10774 / NCTC 10582 / VPI-5482 / E50)).